Here is a 474-residue protein sequence, read N- to C-terminus: tRNA-2-methylthio-N(6)-dimethylallyladenosine synthase (474 aa).

One can recognise an MTTase N-terminal domain in the interval 3–120; the sequence is KKLHIKTWGC…LPEMINHVQG (118 aa). Residues Cys12, Cys49, Cys83, Cys157, Cys161, and Cys164 each contribute to the [4Fe-4S] cluster site. In terms of domain architecture, Radical SAM core spans 143 to 375; the sequence is RAEGPTAFVS…QQRITQQAME (233 aa). One can recognise a TRAM domain in the interval 378-441; the sequence is REMVGTVQRI…ASSLRGILLR (64 aa).

This sequence belongs to the methylthiotransferase family. MiaB subfamily. In terms of assembly, monomer. It depends on [4Fe-4S] cluster as a cofactor.

The protein resides in the cytoplasm. The catalysed reaction is N(6)-dimethylallyladenosine(37) in tRNA + (sulfur carrier)-SH + AH2 + 2 S-adenosyl-L-methionine = 2-methylsulfanyl-N(6)-dimethylallyladenosine(37) in tRNA + (sulfur carrier)-H + 5'-deoxyadenosine + L-methionine + A + S-adenosyl-L-homocysteine + 2 H(+). Catalyzes the methylthiolation of N6-(dimethylallyl)adenosine (i(6)A), leading to the formation of 2-methylthio-N6-(dimethylallyl)adenosine (ms(2)i(6)A) at position 37 in tRNAs that read codons beginning with uridine. The polypeptide is tRNA-2-methylthio-N(6)-dimethylallyladenosine synthase (Yersinia enterocolitica serotype O:8 / biotype 1B (strain NCTC 13174 / 8081)).